Reading from the N-terminus, the 226-residue chain is ADP-ribosylation factor-like protein 6-interacting protein 6 (226 aa).

Residues 1–49 (MSFVESWRFAGARRRRQVTPGPATRPGYSDYTQGDSWGEGEGDEDEGCD) form a disordered region. Residues Ser-2 and Ser-36 each carry the phosphoserine modification. Acidic residues predominate over residues 38 to 48 (GEGEGDEDEGC). A phosphoserine mark is found at Ser-60, Ser-65, and Ser-80. Transmembrane regions (helical) follow at residues 111 to 131 (ILCSLLFAVLLAFLLAIAYMI), 150 to 170 (LLGFWSLLIISLTAGLSCCSF), and 205 to 225 (MGYSMAILNGIVAALTVAWCL).

The protein belongs to the ARL6IP6 family.

Its subcellular location is the nucleus inner membrane. In Mus musculus (Mouse), this protein is ADP-ribosylation factor-like protein 6-interacting protein 6 (Arl6ip6).